Consider the following 401-residue polypeptide: Probable tRNA sulfurtransferase (401 aa).

The THUMP domain maps to 60–165 (EALFPHLKQV…EEATFLTIRD (106 aa)). Residues 183–184 (ML), 208–209 (HF), arginine 265, glycine 287, and glutamine 296 each bind ATP.

It belongs to the ThiI family.

The protein localises to the cytoplasm. It carries out the reaction [ThiI sulfur-carrier protein]-S-sulfanyl-L-cysteine + a uridine in tRNA + 2 reduced [2Fe-2S]-[ferredoxin] + ATP + H(+) = [ThiI sulfur-carrier protein]-L-cysteine + a 4-thiouridine in tRNA + 2 oxidized [2Fe-2S]-[ferredoxin] + AMP + diphosphate. The catalysed reaction is [ThiS sulfur-carrier protein]-C-terminal Gly-Gly-AMP + S-sulfanyl-L-cysteinyl-[cysteine desulfurase] + AH2 = [ThiS sulfur-carrier protein]-C-terminal-Gly-aminoethanethioate + L-cysteinyl-[cysteine desulfurase] + A + AMP + 2 H(+). Its pathway is cofactor biosynthesis; thiamine diphosphate biosynthesis. In terms of biological role, catalyzes the ATP-dependent transfer of a sulfur to tRNA to produce 4-thiouridine in position 8 of tRNAs, which functions as a near-UV photosensor. Also catalyzes the transfer of sulfur to the sulfur carrier protein ThiS, forming ThiS-thiocarboxylate. This is a step in the synthesis of thiazole, in the thiamine biosynthesis pathway. The sulfur is donated as persulfide by IscS. The chain is Probable tRNA sulfurtransferase from Bacillus subtilis (strain 168).